The following is a 737-amino-acid chain: Catalase-peroxidase (737 aa).

Residues 1–23 (MLKKILPVLITLAIVHNTPTAWA) form the signal peptide. A cross-link (tryptophyl-tyrosyl-methioninium (Trp-Tyr) (with M-249)) is located at residues 102-223 (WHGAGTYRIY…LAATQMGLIY (122 aa)). Residue H103 is the Proton acceptor of the active site. A cross-link (tryptophyl-tyrosyl-methioninium (Tyr-Met) (with W-102)) is located at residues 223–249 (YVNPEGPNGKPDPVAAAKDIREAFARM). H264 is a binding site for heme b.

It belongs to the peroxidase family. Peroxidase/catalase subfamily. Homodimer or homotetramer. The cofactor is heme b. Formation of the three residue Trp-Tyr-Met cross-link is important for the catalase, but not the peroxidase activity of the enzyme.

The catalysed reaction is H2O2 + AH2 = A + 2 H2O. It catalyses the reaction 2 H2O2 = O2 + 2 H2O. In terms of biological role, bifunctional enzyme with both catalase and broad-spectrum peroxidase activity. The protein is Catalase-peroxidase of Yersinia pseudotuberculosis serotype O:3 (strain YPIII).